We begin with the raw amino-acid sequence, 338 residues long: Aspartate-semialdehyde dehydrogenase (338 aa).

NADP(+) contacts are provided by residues serine 13–valine 16 and arginine 41–serine 42. Arginine 101 lines the phosphate pocket. The Acyl-thioester intermediate role is filled by cysteine 132. Glutamine 159 lines the substrate pocket. Serine 162–glycine 163 contributes to the NADP(+) binding site. Lysine 216 contacts phosphate. A substrate-binding site is contributed by arginine 238. The Proton acceptor role is filled by histidine 245. Residue asparagine 317 participates in NADP(+) binding.

This sequence belongs to the aspartate-semialdehyde dehydrogenase family. In terms of assembly, homodimer.

It catalyses the reaction L-aspartate 4-semialdehyde + phosphate + NADP(+) = 4-phospho-L-aspartate + NADPH + H(+). Its pathway is amino-acid biosynthesis; L-lysine biosynthesis via DAP pathway; (S)-tetrahydrodipicolinate from L-aspartate: step 2/4. It functions in the pathway amino-acid biosynthesis; L-methionine biosynthesis via de novo pathway; L-homoserine from L-aspartate: step 2/3. It participates in amino-acid biosynthesis; L-threonine biosynthesis; L-threonine from L-aspartate: step 2/5. Functionally, catalyzes the NADPH-dependent formation of L-aspartate-semialdehyde (L-ASA) by the reductive dephosphorylation of L-aspartyl-4-phosphate. In Shewanella violacea (strain JCM 10179 / CIP 106290 / LMG 19151 / DSS12), this protein is Aspartate-semialdehyde dehydrogenase.